A 395-amino-acid chain; its full sequence is Na(+)/H(+) antiporter NhaA 1 (395 aa).

Helical transmembrane passes span 11 to 31, 63 to 83, 99 to 119, 129 to 149, 158 to 178, 183 to 203, 223 to 243, 258 to 278, 282 to 302, 332 to 352, and 364 to 384; these read FFSSDASGGIVLIIAAALAMV, MLLWINDALMAVFFLLIGLEV, VFPVIAALGGMIVPALVYLAF, GWAIPAATDIAFALGVLALLG, IFLMALAIIDDLGAIVIIALF, LSMLSLGVAAAAIAVLMALNL, VLKSGVHATLAGVIVGFMIPL, VLHPWVAFMILPLFAFANAGV, GVTLAGLTSLLPLGIMAGLFI, IMAVGILCGIGFTMSIFIATL, and WAKLGILIGSVLSAVVGYLIL.

Belongs to the NhaA Na(+)/H(+) (TC 2.A.33) antiporter family.

The protein localises to the cell inner membrane. It carries out the reaction Na(+)(in) + 2 H(+)(out) = Na(+)(out) + 2 H(+)(in). Na(+)/H(+) antiporter that extrudes sodium in exchange for external protons. This Klebsiella pneumoniae subsp. pneumoniae (strain ATCC 700721 / MGH 78578) protein is Na(+)/H(+) antiporter NhaA 1.